The sequence spans 167 residues: UPF0225 protein VV1_2912 (167 aa).

This sequence belongs to the UPF0225 family.

This chain is UPF0225 protein VV1_2912, found in Vibrio vulnificus (strain CMCP6).